The following is a 289-amino-acid chain: Serine/threonine-protein phosphatase Pgam5, mitochondrial (289 aa).

This sequence belongs to the phosphoglycerate mutase family. BPG-dependent PGAM subfamily. In terms of assembly, interacts with Pk92B/ASK1.

It localises to the mitochondrion outer membrane. The catalysed reaction is O-phospho-L-seryl-[protein] + H2O = L-seryl-[protein] + phosphate. The enzyme catalyses O-phospho-L-threonyl-[protein] + H2O = L-threonyl-[protein] + phosphate. Displays phosphatase activity for serine/threonine residues, and dephosphorylates and activates Pk92B kinase. Has apparently no phosphoglycerate mutase activity. This Drosophila mojavensis (Fruit fly) protein is Serine/threonine-protein phosphatase Pgam5, mitochondrial.